We begin with the raw amino-acid sequence, 330 residues long: Glucokinase (330 aa).

14–19 (ADIGGT) provides a ligand contact to ATP.

It belongs to the bacterial glucokinase family.

It is found in the cytoplasm. The catalysed reaction is D-glucose + ATP = D-glucose 6-phosphate + ADP + H(+). The chain is Glucokinase from Colwellia psychrerythraea (strain 34H / ATCC BAA-681) (Vibrio psychroerythus).